A 169-amino-acid polypeptide reads, in one-letter code: uncharacterized protein (169 aa).

The HD domain occupies 18 to 130; it reads VVEHCLAVSE…VAHADNLIFG (113 aa).

This is an uncharacterized protein from Methanocaldococcus jannaschii (strain ATCC 43067 / DSM 2661 / JAL-1 / JCM 10045 / NBRC 100440) (Methanococcus jannaschii).